A 238-amino-acid chain; its full sequence is Purine nucleoside phosphorylase DeoD-type (238 aa).

His-4 is a binding site for a purine D-ribonucleoside. Residues Gly-20, Arg-24, Arg-43, and 87–90 (RVGS) contribute to the phosphate site. Residues 179–181 (EME) and 203–204 (SD) each bind a purine D-ribonucleoside. Asp-204 acts as the Proton donor in catalysis.

The protein belongs to the PNP/UDP phosphorylase family. In terms of assembly, homohexamer; trimer of homodimers.

The enzyme catalyses a purine D-ribonucleoside + phosphate = a purine nucleobase + alpha-D-ribose 1-phosphate. The catalysed reaction is a purine 2'-deoxy-D-ribonucleoside + phosphate = a purine nucleobase + 2-deoxy-alpha-D-ribose 1-phosphate. Functionally, catalyzes the reversible phosphorolytic breakdown of the N-glycosidic bond in the beta-(deoxy)ribonucleoside molecules, with the formation of the corresponding free purine bases and pentose-1-phosphate. This chain is Purine nucleoside phosphorylase DeoD-type, found in Haemophilus influenzae (strain 86-028NP).